A 345-amino-acid chain; its full sequence is Serine proteinase inhibitor 2 (345 aa).

It belongs to the serpin family. Poxviruses subfamily.

It localises to the host cytoplasm. In terms of biological role, viral serpin that inhibits both cysteine and serine proteinases involved in the regulation of host inflammatory and apoptosis processes. Major anti-apoptotic protein which inhibits both intrinsic and extrinsic pathways and strongly cleaves host CASP1 and CASP8 but is a rather poor inhibitor of host CASP3. Prevents the proteolytic activity of host interleukin-1-beta converting enzyme (ICE) and ICE-like enzymes. Can also block apoptosis through host tumor necrosis factor (TNF) receptor. The inhibition of host ICE is an example of a 'cross-class' interaction, in which a serpin inhibits a non-serine proteinase. Also inhibits granzyme B. The polypeptide is Serine proteinase inhibitor 2 (OPG199) (Vaccinia virus (strain Western Reserve) (VACV)).